The sequence spans 256 residues: Dihydromonacolin L-[lovastatin nonaketide synthase] thioesterase (256 aa).

Active-site charge relay system residues include S122, D201, and H229.

This sequence belongs to the LovG family.

The enzyme catalyses dihydromonacolin L-[lovastatin nonaketide synthase] + H2O = holo-[lovastatin nonaketide synthase] + dihydromonacolin L carboxylate + H(+). Its pathway is polyketide biosynthesis; lovastatin biosynthesis. In terms of biological role, esterase; part of the gene cluster that mediates the biosynthesis of lovastatin (also known as mevinolin, mevacor or monacolin K), a hypolipidemic inhibitor of (3S)-hydroxymethylglutaryl-coenzyme A (HMG-CoA) reductase (HMGR). The first step in the biosynthesis of lovastatin is the production of dihydromonacolin L acid by the lovastatin nonaketide synthase lovB and the trans-acting enoyl reductase lovC via condensation of one acetyl-CoA unit and 8 malonyl-CoA units. Dihydromonacolin L acid is released from lovB by the thioesterase lovG. Next, dihydromonacolin L acid is oxidized by the dihydromonacolin L monooxygenase lovA twice to form monacolin J acid. The 2-methylbutyrate moiety of lovastatin is synthesized by the lovastatin diketide synthase lovF via condensation of one acetyl-CoA unit and one malonyl-CoA unit. Finally, the covalent attachment of this moiety to monacolin J acid is catalyzed by the transesterase lovD to yield lovastatin. LovD has broad substrate specificity and can also convert monacolin J to simvastatin using alpha-dimethylbutanoyl-S-methyl-3-mercaptopropionate (DMB-S-MMP) as the thioester acyl donor, and can also catalyze the reverse reaction and function as hydrolase in vitro. LovD has much higher activity with LovF-bound 2-methylbutanoate than with free diketide substrates. Esterase that catalyzes the release of covalently bound dihydromonacolin L from LovB during lovastatin biosynthesis. The polypeptide is Dihydromonacolin L-[lovastatin nonaketide synthase] thioesterase (Aspergillus terreus (strain NIH 2624 / FGSC A1156)).